The chain runs to 376 residues: Chaperone protein DnaJ (376 aa).

In terms of domain architecture, J spans 4–70 (DYYQILGVSK…QKRAAYDRFG (67 aa)). The CR-type zinc-finger motif lies at 139–217 (GVEKNISFSS…CHGLGRYHKQ (79 aa)). C152, C155, C169, C172, C191, C194, C205, and C208 together coordinate Zn(2+). CXXCXGXG motif repeat units lie at residues 152–159 (CDTCHGSG), 169–176 (CDACGGVG), 191–198 (CHKCQGNG), and 205–212 (CKKCHGLG).

Belongs to the DnaJ family. Homodimer. Zn(2+) serves as cofactor.

It is found in the cytoplasm. Its function is as follows. Participates actively in the response to hyperosmotic and heat shock by preventing the aggregation of stress-denatured proteins and by disaggregating proteins, also in an autonomous, DnaK-independent fashion. Unfolded proteins bind initially to DnaJ; upon interaction with the DnaJ-bound protein, DnaK hydrolyzes its bound ATP, resulting in the formation of a stable complex. GrpE releases ADP from DnaK; ATP binding to DnaK triggers the release of the substrate protein, thus completing the reaction cycle. Several rounds of ATP-dependent interactions between DnaJ, DnaK and GrpE are required for fully efficient folding. Also involved, together with DnaK and GrpE, in the DNA replication of plasmids through activation of initiation proteins. The sequence is that of Chaperone protein DnaJ from Rickettsia bellii (strain RML369-C).